Here is a 364-residue protein sequence, read N- to C-terminus: S-adenosylmethionine:tRNA ribosyltransferase-isomerase (364 aa).

Belongs to the QueA family. As to quaternary structure, monomer.

It is found in the cytoplasm. The enzyme catalyses 7-aminomethyl-7-carbaguanosine(34) in tRNA + S-adenosyl-L-methionine = epoxyqueuosine(34) in tRNA + adenine + L-methionine + 2 H(+). It participates in tRNA modification; tRNA-queuosine biosynthesis. Functionally, transfers and isomerizes the ribose moiety from AdoMet to the 7-aminomethyl group of 7-deazaguanine (preQ1-tRNA) to give epoxyqueuosine (oQ-tRNA). In Bradyrhizobium sp. (strain ORS 278), this protein is S-adenosylmethionine:tRNA ribosyltransferase-isomerase.